A 234-amino-acid polypeptide reads, in one-letter code: Small ribosomal subunit protein uS3 (234 aa).

The region spanning 39–107 is the KH type-2 domain; sequence VRKFLNKELA…PAQINIAEVK (69 aa).

The protein belongs to the universal ribosomal protein uS3 family. In terms of assembly, part of the 30S ribosomal subunit. Forms a tight complex with proteins S10 and S14.

In terms of biological role, binds the lower part of the 30S subunit head. Binds mRNA in the 70S ribosome, positioning it for translation. This is Small ribosomal subunit protein uS3 from Haemophilus ducreyi (strain 35000HP / ATCC 700724).